Here is a 406-residue protein sequence, read N- to C-terminus: 2,3-bisphosphoglycerate-independent phosphoglycerate mutase (406 aa).

The protein belongs to the BPG-independent phosphoglycerate mutase family. A-PGAM subfamily.

The enzyme catalyses (2R)-2-phosphoglycerate = (2R)-3-phosphoglycerate. It participates in carbohydrate degradation; glycolysis; pyruvate from D-glyceraldehyde 3-phosphate: step 3/5. In terms of biological role, catalyzes the interconversion of 2-phosphoglycerate and 3-phosphoglycerate. This Methanococcus maripaludis (strain DSM 14266 / JCM 13030 / NBRC 101832 / S2 / LL) protein is 2,3-bisphosphoglycerate-independent phosphoglycerate mutase.